A 229-amino-acid chain; its full sequence is Probable queuosine precursor transporter (229 aa).

The next 7 membrane-spanning stretches (helical) occupy residues phenylalanine 6–glycine 26, methionine 28–threonine 48, valine 49–alanine 69, valine 86–phenylalanine 106, leucine 118–phenylalanine 138, leucine 160–valine 182, and valine 192–tyrosine 214.

The protein belongs to the vitamin uptake transporter (VUT/ECF) (TC 2.A.88) family. Q precursor transporter subfamily.

The protein resides in the cell membrane. Functionally, involved in the import of queuosine (Q) precursors, required for Q precursor salvage. This Bacillus subtilis (strain 168) protein is Probable queuosine precursor transporter (ypdP).